Consider the following 193-residue polypeptide: Flagellar transcriptional regulator FlhC (193 aa).

Zn(2+) is bound by residues C138, C141, C158, and C161.

This sequence belongs to the FlhC family. As to quaternary structure, heterohexamer composed of two FlhC and four FlhD subunits. Each FlhC binds a FlhD dimer, forming a heterotrimer, and a hexamer assembles by dimerization of two heterotrimers. Zn(2+) is required as a cofactor.

The protein resides in the cytoplasm. In terms of biological role, functions in complex with FlhD as a master transcriptional regulator that regulates transcription of several flagellar and non-flagellar operons by binding to their promoter region. Activates expression of class 2 flagellar genes, including fliA, which is a flagellum-specific sigma factor that turns on the class 3 genes. Also regulates genes whose products function in a variety of physiological pathways. This Yersinia enterocolitica protein is Flagellar transcriptional regulator FlhC.